The following is a 325-amino-acid chain: Golgi to ER traffic protein 4 homolog A (325 aa).

Disordered regions lie at residues 1–22 (MAAA…GGVQ) and 306–325 (SGED…IELD). A compositionally biased stretch (acidic residues) spans 307–317 (GEDDDVEDGQE).

It belongs to the GET4 family. As to quaternary structure, component of the bag6/bat3 complex.

The protein resides in the cytoplasm. It is found in the cytosol. Functionally, as part of a cytosolic protein quality control complex, the bag6/bat3 complex, maintains misfolded and hydrophobic patches-containing proteins in a soluble state and participates in their proper delivery to the endoplasmic reticulum or alternatively can promote their sorting to the proteasome where they undergo degradation. The bag6/bat3 complex is involved in the post-translational delivery of tail-anchored/type II transmembrane proteins to the endoplasmic reticulum membrane. Similarly, the bag6/bat3 complex also functions as a sorting platform for proteins of the secretory pathway that are mislocalized to the cytosol either delivering them to the proteasome for degradation or to the endoplasmic reticulum. The bag6/bat3 complex also plays a role in the endoplasmic reticulum-associated degradation (ERAD), a quality control mechanism that eliminates unwanted proteins of the endoplasmic reticulum through their retrotranslocation to the cytosol and their targeting to the proteasome. It maintains these retrotranslocated proteins in an unfolded yet soluble state condition in the cytosol to ensure their proper delivery to the proteasome. In Xenopus laevis (African clawed frog), this protein is Golgi to ER traffic protein 4 homolog A (get4-a).